The primary structure comprises 191 residues: Protein Ves (191 aa).

Belongs to the Ves family.

This chain is Protein Ves, found in Escherichia coli O8 (strain IAI1).